The primary structure comprises 514 residues: MTLQDEIKKRRTFAIISHPDAGKTTITEQLLYFGGEIREAGTVKGKKSGTFAKSDWMDIEKQRGISVTSSVMQFDYAGKRVNILDTPGHEDFSEDTYRTLMAVDAAVMVVDSAKGIEAQTKKLFEVVKHRNIPVFTFINKLDRDGREPLDLLEELEEVLGIASYPMNWPIGMGKSFEGLYDLHNKRLELYKGDERFASIEDGDQLFANNPFYEQVKEDIELLQEAGNDFSEQAILDGDLTPVFFGSALTNFGVQTFLDTFLEFAPEPHGHKTTEGNVIDPLAKDFSGFVFKIQANMDPRHRDRIAFVRIVSGEFERGMGVNLTRTGKGAKLSNVTQFMAESRENVTNAVAGDIIGVYDTGTYQVGDTLTVGKNKFEFEPLPTFTPELFMKVSAKNVMKQKSFHKGIEQLVQEGAIQLYKNYQTGEYMLGAVGQLQFEVFKHRMEGEYNAEVVMTPMGKKTVRWINSDDLDERMSSSRNILAKDRFDQPVFLFENDFALRWFADKYPDVKLEEKM.

The tr-type G domain occupies 8-268; that stretch reads KKRRTFAIIS…TFLEFAPEPH (261 aa). GTP contacts are provided by residues 17-24, 85-89, and 139-142; these read SHPDAGKT, DTPGH, and NKLD.

Belongs to the TRAFAC class translation factor GTPase superfamily. Classic translation factor GTPase family. PrfC subfamily.

The protein resides in the cytoplasm. In terms of biological role, increases the formation of ribosomal termination complexes and stimulates activities of RF-1 and RF-2. It binds guanine nucleotides and has strong preference for UGA stop codons. It may interact directly with the ribosome. The stimulation of RF-1 and RF-2 is significantly reduced by GTP and GDP, but not by GMP. The polypeptide is Peptide chain release factor 3 (Streptococcus agalactiae serotype Ia (strain ATCC 27591 / A909 / CDC SS700)).